Here is a 1408-residue protein sequence, read N- to C-terminus: ABC transporter B family member 20 (1408 aa).

Residues 14–49 (HMQPLTPVSEVSEPPESPSPYLDPGAESGGGTGTAA) are disordered. Positions 20 to 39 (PVSEVSEPPESPSPYLDPGA) are enriched in low complexity. Residues 86–106 (VLMIVGSVAAAAHGTALIVYL) form a helical membrane-spanning segment. Positions 88-381 (MIVGSVAAAA…AATNFYSFDQ (294 aa)) constitute an ABC transmembrane type-1 1 domain. N-linked (GlcNAc...) asparagine glycosylation is present at Asn120. 3 helical membrane-spanning segments follow: residues 141–161 (IVYI…CWIL), 214–233 (VGNY…IGFV), and 238–260 (IALI…NIFL). Asn293 carries an N-linked (GlcNAc...) asparagine glycan. 2 helical membrane-spanning segments follow: residues 312-332 (GILI…LAIC) and 353-373 (GEII…NQAA). Residues 414 to 649 (IEFRNVYFSY…GGLYAELLKC (236 aa)) enclose the ABC transporter 1 domain. Residue 449 to 456 (GRNGSGKS) coordinates ATP. Residue Asn451 is glycosylated (N-linked (GlcNAc...) asparagine). 2 disordered regions span residues 676–735 (SSAG…SLDC) and 752–816 (LPHL…DAQH). Over residues 762–771 (CPQQKSNGSE) the composition is skewed to polar residues. The N-linked (GlcNAc...) asparagine glycan is linked to Asn768. A compositionally biased stretch (basic and acidic residues) spans 802-816 (DDTKANGKASKDAQH). Positions 836 to 1124 (AVLGSLGAAI…PFGLAPYILK (289 aa)) constitute an ABC transmembrane type-1 2 domain. A run of 6 helical transmembrane segments spans residues 841-861 (LGAA…ALVV), 881-901 (LIIA…HFYF), 959-979 (IFIQ…LLGW), 983-1003 (LVAL…KLWL), 1062-1082 (IGFA…LLLW), and 1103-1123 (MVFS…PYIL). The ABC transporter 2 domain occupies 1159–1396 (IELKNVDFCY…NGLYVRLMQP (238 aa)). Asn1179 is a glycosylation site (N-linked (GlcNAc...) asparagine). 1194 to 1201 (GVSGSGKS) serves as a coordination point for ATP. Residues Asn1261 and Asn1347 are each glycosylated (N-linked (GlcNAc...) asparagine).

It belongs to the ABC transporter superfamily. ABCB family. Multidrug resistance exporter (TC 3.A.1.201) subfamily. As to expression, expressed in aerial tissues.

Its subcellular location is the membrane. It carries out the reaction (indol-3-yl)acetate(in) + ATP + H2O = (indol-3-yl)acetate(out) + ADP + phosphate + H(+). In terms of biological role, probable auxin efflux transporter that contributes, together with ABCB6 and in a FKBP42/TWD1-dependent manner, to the regulation of leaf position and morphology, internode distribution, roots development, and inflorescence organization, probably by modulating auxin repartition. This chain is ABC transporter B family member 20, found in Arabidopsis thaliana (Mouse-ear cress).